The sequence spans 258 residues: Axonemal dynein light intermediate polypeptide 1 (258 aa).

2 disordered regions span residues Met1–Asp60 and Val207–Lys231. Residues Ser34–Ala44 show a composition bias toward low complexity. Residues Met176 to Ala255 are a coiled coil.

This sequence belongs to the inner dynein arm light chain family. In terms of assembly, interacts with CFAP45. Interacts with DYNC1H1. Expressed in many tissues. A smaller 0.9 kb and a larger 2.5 kb transcripts were detected at the highest level in the testis, at medium levels in the prostate, heart, liver, lung and pancreas, at low levels in the ovary, skeletal muscle and small intestine. Not detected in spleen, colon epithelium, thymus or peripheral blood leukocytes. The 0.9 kb transcript is expressed at a 20-fold higher level than the 2.5 kb transcript in the testis. Expressed in spermatozoa and airway epithelial cells (at protein level).

It localises to the cell projection. The protein resides in the cilium. The protein localises to the flagellum. Its subcellular location is the dynein axonemal particle. It is found in the cytoplasm. Its function is as follows. Involved in sperm flagellum assembly. The polypeptide is Axonemal dynein light intermediate polypeptide 1 (Homo sapiens (Human)).